The following is a 210-amino-acid chain: Protein-methionine-sulfoxide reductase heme-binding subunit MsrQ (210 aa).

Helical transmembrane passes span 8–28 (LAVF…AWIF), 37–57 (VLVE…LSMT), 75–95 (LGLW…LFIL), 110–130 (PYII…VTSN), 147–167 (IIYV…RADL), and 169–189 (EWAL…PVFA).

Belongs to the MsrQ family. As to quaternary structure, heterodimer of a catalytic subunit (MsrP) and a heme-binding subunit (MsrQ). FMN serves as cofactor. It depends on heme b as a cofactor.

It is found in the cell inner membrane. Its function is as follows. Part of the MsrPQ system that repairs oxidized periplasmic proteins containing methionine sulfoxide residues (Met-O), using respiratory chain electrons. Thus protects these proteins from oxidative-stress damage caused by reactive species of oxygen and chlorine generated by the host defense mechanisms. MsrPQ is essential for the maintenance of envelope integrity under bleach stress, rescuing a wide series of structurally unrelated periplasmic proteins from methionine oxidation. MsrQ provides electrons for reduction to the reductase catalytic subunit MsrP, using the quinone pool of the respiratory chain. The protein is Protein-methionine-sulfoxide reductase heme-binding subunit MsrQ of Pseudomonas syringae pv. syringae (strain B728a).